The following is a 54-amino-acid chain: Apelin receptor early endogenous ligand (54 aa).

Residues 1–23 form the signal peptide; that stretch reads MRFQPLFWVFFIFAMSLLFISEQ.

This sequence belongs to the Elabela/Toddler family. Interacts with APLNR. Expressed in the placenta. Expressed in syncytiotrophoblasts of the placenta labyrinth at 10.5 dpc. Expressed in placental chorionic trophoblasts (at protein level). Expressed in a small population of epiblast cells in the distal half of the embryo at 7 dpc. Expressed in newly formed definitive endoderm cells in the proximal half of the embryo, while it is not present in extra-embryonic endoderm at 7.5 dpc. This expression pattern then changes to the ventral aspect of the developing foregut pocket and the entire hindgut pocket at 8.5 dpc, before becoming restricted to the foregut overlying the heart and the posterior-most hindgut. Not detected in endothelial precursor cells of the yolk sac at 8 dpc. Expressed in extraembryonic tissues as well as in the chorion at 8.25 dpc. Expressed in endometrial stroma of the uterus of pregnant mice at 8.5 dpc. Expressed in the developing heart, caudal neural tube and trophobasts at 9 dpc. Expressed in the chorionic plate of the chorioallantoic placenta at 9 dpc. Expressed in the posterior half of the ventral neural tube at 9.25 dpc. Expressed in trophoblast cells at the periphery of the placenta at 9.5 dpc. Expressed in collecting ducts of the kidney of pregnant mice at 10.5 dpc. Expressed in the epicardium of the developing heart at 11.5 dpc. Expressed weakly in the adult heart. Expressed in endothelial cells and fibroblasts and weakly in cardiomyocytes.

The protein resides in the secreted. The protein localises to the extracellular space. Peptide hormone that functions as endogenous ligand for the G-protein-coupled apelin receptor (APLNR/APJ), that plays a role in the regulation of normal cardiovascular function and fluid homeostasis. Functions as a balanced agonist activating both G(i) protein pathway and beta-arrestin pathway of APLNR. Downstream G proteins activation, apelin can inhibit cAMP production and activate key intracellular effectors such as ERKs. On the other hand, APLNR activation induces beta-arrestin recruitment to the membrane leading to desensitization and internalization of the receptor. Required for mesendodermal differentiation, blood vessels formation and heart morphogenesis during early development and for adult cardiovascular homeostasis. Acts as a motogen by promoting mesendodermal cell migration during gastrulation by binding and activating APLNR. Acts as an early embryonic regulator of cellular movement with a role in migration and development of cardiac progenitor cells. May act as a chemoattractant for the activation of angioblast migration toward the embryonic midline, i.e. the position of the future vessel formation, during vasculogenesis. Positively regulates sinus venosus (SV)-derived endothelial cells migration into the developing heart to promote coronary blood vessel sprouting. Plays a role in placental vascular development; promotes placental trophoblast invasion and spiral artery remodeling in the uterus. Involved in the regulation of maternal cardiovascular homeostasis to prevent gestational hypertension and for potent cardioprotective functions during heart failure. Mediates myocardial contractility in an ERK1/2-dependent manner. The protein is Apelin receptor early endogenous ligand of Mus musculus (Mouse).